The sequence spans 307 residues: Serine/threonine-protein phosphatase 4 catalytic subunit (307 aa).

Residue alanine 2 is modified to N-acetylalanine. Aspartate 54, histidine 56, aspartate 82, and asparagine 114 together coordinate Mn(2+). Histidine 115 acts as the Proton donor in catalysis. 2 residues coordinate Mn(2+): histidine 164 and histidine 238. Leucine 307 bears the Leucine methyl ester mark.

This sequence belongs to the PPP phosphatase family. PP-4 (PP-X) subfamily. As to quaternary structure, serine/threonine-protein phosphatase 4 (PP4) occurs in different assemblies of the catalytic and one or more regulatory subunits. Component of the PP4 complexes PPP4C-PPP4R1, PPP4C-PPP4R2, PPP4C-PPP4R2-PPP4R3A, PPP4C-PPP4R2-PPP4R3B and PPP4C-PPP4R4. The PPP4C-PPP4R2 complex appears to be a tetramer composed of 2 molecules of PPP4C and 2 molecules of PPP4R2. Interacts with REL, NFKB1/p50 and RELA. Interacts with SMN1 and GEMIN4. Interacts with IRS4 (phosphorylated). Interacts with SMEK1/PPP4R3A; the interaction requires PP4R2. Interacts with HDAC3. It depends on Mn(2+) as a cofactor. In terms of processing, methylation at the C-terminal Leu-307 is critical for interactions with regulatory subunits and functions in DNA repair.

It is found in the cytoplasm. Its subcellular location is the nucleus. It localises to the cytoskeleton. The protein resides in the microtubule organizing center. The protein localises to the centrosome. The enzyme catalyses O-phospho-L-seryl-[protein] + H2O = L-seryl-[protein] + phosphate. It catalyses the reaction O-phospho-L-threonyl-[protein] + H2O = L-threonyl-[protein] + phosphate. In terms of biological role, protein phosphatase that is involved in many processes such as microtubule organization at centrosomes, maturation of spliceosomal snRNPs, apoptosis, DNA repair, tumor necrosis factor (TNF)-alpha signaling, activation of c-Jun N-terminal kinase MAPK8, regulation of histone acetylation, DNA damage checkpoint signaling, NF-kappa-B activation and cell migration. The PPP4C-PPP4R1 PP4 complex may play a role in dephosphorylation and regulation of HDAC3. The PPP4C-PPP4R2-PPP4R3A PP4 complex specifically dephosphorylates H2AX phosphorylated on Ser-140 (gamma-H2AX) generated during DNA replication and required for DNA double strand break repair. Dephosphorylates NDEL1 at CDK1 phosphorylation sites and negatively regulates CDK1 activity in interphase. In response to DNA damage, catalyzes RPA2 dephosphorylation, an essential step for DNA repair since it allows the efficient RPA2-mediated recruitment of RAD51 to chromatin. This Homo sapiens (Human) protein is Serine/threonine-protein phosphatase 4 catalytic subunit (PPP4C).